A 227-amino-acid chain; its full sequence is Claudin-15 (227 aa).

A topological domain (cytoplasmic) is located at residue Met-1. Residues 2–24 (SVAVETFGFFMSALGLLMLGLTL) form a helical membrane-spanning segment. Over 25–74 (SNSYWRVSTVHGNVITTNTIFENLWYSCATDSLGVSNCWDFPSMLALSGY) the chain is Extracellular. The cysteines at positions 52 and 62 are disulfide-linked. Residues 75-99 (VQGCRALMITAILLGFLGLFLGMVG) traverse the membrane as a helical segment. Residues 100 to 115 (LRCTNVGNMDLSKKAK) lie on the Cytoplasmic side of the membrane. Ser-111 is subject to Phosphoserine. Residues 116–140 (LLAIAGTLHILAGACGMVAISWYAV) form a helical membrane-spanning segment. Residues 141–159 (NITTDFFNPLYAGTKYELG) lie on the Extracellular side of the membrane. Residues 146–147 (FF) form an important for the formation of tight-junction strand-like structures region. Residues 160–182 (PALYLGWSASLLSILGGICVFST) traverse the membrane as a helical segment. Residues 183–227 (CCCSSKEEPATRAGLPYKPSTVVIPRATSDESDISFGKYGKNAYV) lie on the Cytoplasmic side of the membrane. Phosphoserine is present on residues Ser-211, Ser-214, and Ser-217.

This sequence belongs to the claudin family. Can form homo- and heteropolymeric tight junction strands. Palmitoylated when heterogeneously expressed in S.frugiperda cells. In terms of tissue distribution, detected in duodenum, jejunum and ileum. Detected on intestinal villi and crypts (at protein level). Ubiquitous. Detected in small and large intestine, colon, jejunum, heart, kidney and lung.

It localises to the cell junction. The protein localises to the tight junction. Its subcellular location is the cell membrane. The catalysed reaction is Na(+)(in) = Na(+)(out). It carries out the reaction K(+)(in) = K(+)(out). It catalyses the reaction Cs(+)(in) = Cs(+)(out). The enzyme catalyses Rb(+)(in) = Rb(+)(out). The catalysed reaction is Li(+)(in) = Li(+)(out). It carries out the reaction NH4(+)(in) = NH4(+)(out). It catalyses the reaction methylamine(out) = methylamine(in). The enzyme catalyses H2O(in) = H2O(out). Functionally, forms paracellular channels: polymerizes in tight junction strands with cation- and water-selective channels through the strands, conveying epithelial permeability in a process known as paracellular tight junction permeability. In intestinal epithelium, allows for sodium and water fluxes from the peritoneal side to the lumen of the intestine to regulate nutrient absorption and intestinal morphogenesis. The chain is Claudin-15 from Mus musculus (Mouse).